Here is a 129-residue protein sequence, read N- to C-terminus: Aspartate 1-decarboxylase (129 aa).

Ser25 (schiff-base intermediate with substrate; via pyruvic acid) is an active-site residue. A Pyruvic acid (Ser) modification is found at Ser25. Residue Thr57 participates in substrate binding. Residue Tyr58 is the Proton donor of the active site. A substrate-binding site is contributed by 73-75 (GAA).

The protein belongs to the PanD family. As to quaternary structure, heterooctamer of four alpha and four beta subunits. Pyruvate serves as cofactor. In terms of processing, is synthesized initially as an inactive proenzyme, which is activated by self-cleavage at a specific serine bond to produce a beta-subunit with a hydroxyl group at its C-terminus and an alpha-subunit with a pyruvoyl group at its N-terminus.

The protein localises to the cytoplasm. The enzyme catalyses L-aspartate + H(+) = beta-alanine + CO2. Its pathway is cofactor biosynthesis; (R)-pantothenate biosynthesis; beta-alanine from L-aspartate: step 1/1. Catalyzes the pyruvoyl-dependent decarboxylation of aspartate to produce beta-alanine. The protein is Aspartate 1-decarboxylase of Prosthecochloris aestuarii (strain DSM 271 / SK 413).